Reading from the N-terminus, the 191-residue chain is Cyclin-dependent kinase inhibitor 1 (191 aa).

The interval 62–81 is disordered; the sequence is LIHLEEEDKDGDTETSTYRR. The segment at 162–191 is required for inhibitory function and interaction with CDK kinase complexes; sequence QLKEKFKKKYNFDFEKEKPLEGRYEWVKLE.

This sequence belongs to the CDI family. ICK/KRP subfamily. As to quaternary structure, specifically interacts with CDKA-1, but not with CDKB1-1. Interacts with CYCD2-1 and CYCD3-1. In terms of processing, ubiquitinated independently by RKP and SCF (SKP1-CUL1-FBL5/SKP2B) protein ligase complex, leading to proteasomal degradation. As to expression, expressed at low levels in roots, stems, leaves and flowers.

The protein resides in the nucleus. It localises to the nucleoplasm. Functionally, binds and inhibits CYCD2-1/CDKA-1 kinase complex activity. Regulates cell division which is crucial for plant growth, development and morphogenesis. Functions in turning cells from a mitotic to an endoreplicating cell cycle mode. Acts cell- and non-cell-autonomously to regulate endoreduplication by allowing S phase progression, but blocking entry into mitosis. Keeps on the one hand the plant cell cycle locally controlled, and on the other hand provides a possibility of linking cell cycle control in single cells with the supracellular organization of a tissue or an organ. May target specifically CDKA-1. The chain is Cyclin-dependent kinase inhibitor 1 (KRP1) from Arabidopsis thaliana (Mouse-ear cress).